The following is a 497-amino-acid chain: Acetyltransferase adrJ (497 aa).

Active-site proton acceptor residues include His-174 and Asp-422. The interval 430 to 451 (SSAQSSSQNTQKKGKPSYVNGV) is disordered.

The protein belongs to the plant acyltransferase family. In terms of assembly, monomer.

Its pathway is secondary metabolite biosynthesis; terpenoid biosynthesis. Its function is as follows. Acetyltransferase; part of the gene cluster that mediates the biosynthesis of andrastins, meroterpenoid compounds that exhibit inhibitory activity against ras farnesyltransferase, suggesting that they could be promising leads for antitumor agents. The first step of the pathway is the synthesis of 3,5-dimethylorsellinic acid (DMOA) by the polyketide synthase adrD via condensation of one acetyl-CoA starter unit with 3 malonyl-CoA units and 2 methylations. DMAO is then converted to farnesyl-DMAO by the prenyltransferase adrG. The methyltransferase adrK catalyzes the methylation of the carboxyl group of farnesyl-DMAO to farnesyl-DMAO methyl ester which is further converted to epoxyfarnesyl-DMAO methyl ester by the FAD-dependent monooxygenase adrH. The terpene cyclase adrI then catalyzes the carbon skeletal rearrangement to generate the andrastin E, the first compound in the pathway having the andrastin scaffold, with the tetracyclic ring system. The post-cyclization tailoring enzymes adrF, adrE, adrJ, and adrA, are involved in the conversion of andrastin E into andrastin A. The short chain dehydrogenase adrF is responsible for the oxidation of the C-3 a hydroxyl group of andrastin E to yield the corresponding ketone, andrastin D. The ketoreductase adrE stereoselectively reduces the carbonyl moiety to reverse the stereochemistry of the C-3 position to yield andrastin F. The acetyltransferase adrJ is the acetyltransferase that attaches the acetyl group to the C-3 hydroxyl group of andrastin F to yield andrastin C. Finally, the cytochrome P450 monooxygenase adrA catalyzes two sequential oxidation reactions of the C-23 methyl group, to generate the corresponding alcohol andrastin B, and aldehyde andrastin A. The sequence is that of Acetyltransferase adrJ from Penicillium rubens (strain ATCC 28089 / DSM 1075 / NRRL 1951 / Wisconsin 54-1255) (Penicillium chrysogenum).